Here is a 181-residue protein sequence, read N- to C-terminus: Adenine phosphoribosyltransferase (181 aa).

This sequence belongs to the purine/pyrimidine phosphoribosyltransferase family. As to quaternary structure, homodimer.

It is found in the cytoplasm. It catalyses the reaction AMP + diphosphate = 5-phospho-alpha-D-ribose 1-diphosphate + adenine. It participates in purine metabolism; AMP biosynthesis via salvage pathway; AMP from adenine: step 1/1. In terms of biological role, catalyzes a salvage reaction resulting in the formation of AMP, that is energically less costly than de novo synthesis. This Vibrio campbellii (strain ATCC BAA-1116) protein is Adenine phosphoribosyltransferase.